The following is a 248-amino-acid chain: 3-deoxy-manno-octulosonate cytidylyltransferase (248 aa).

The protein belongs to the KdsB family.

Its subcellular location is the cytoplasm. The catalysed reaction is 3-deoxy-alpha-D-manno-oct-2-ulosonate + CTP = CMP-3-deoxy-beta-D-manno-octulosonate + diphosphate. The protein operates within nucleotide-sugar biosynthesis; CMP-3-deoxy-D-manno-octulosonate biosynthesis; CMP-3-deoxy-D-manno-octulosonate from 3-deoxy-D-manno-octulosonate and CTP: step 1/1. It functions in the pathway bacterial outer membrane biogenesis; lipopolysaccharide biosynthesis. Activates KDO (a required 8-carbon sugar) for incorporation into bacterial lipopolysaccharide in Gram-negative bacteria. This is 3-deoxy-manno-octulosonate cytidylyltransferase from Syntrophus aciditrophicus (strain SB).